We begin with the raw amino-acid sequence, 509 residues long: Transcription factor SOX-9 (509 aa).

Disordered regions lie at residues 1–67 (MNLL…SEED) and 160–273 (RLRV…FRDV). Residues 30 to 41 (SAGSPCPSGSGS) show a composition bias toward low complexity. The segment covering 42-52 (DTENTRPQENT) has biased composition (polar residues). 2 stretches are compositionally biased toward basic and acidic residues: residues 56–67 (GEPDLKKESEED) and 160–174 (RLRV…DYKY). The dimerization (DIM) stretch occupies residues 63 to 103 (ESEEDKFPVCIREAVSQVLKGYDWTLVPMPVRVNGSSKNKP). The interval 63–103 (ESEEDKFPVCIREAVSQVLKGYDWTLVPMPVRVNGSSKNKP) is PQA. At S64 the chain carries Phosphoserine. The HMG box DNA-binding region spans 105 to 173 (VKRPMNAFMV…QHKKDHPDYK (69 aa)). At S211 the chain carries Phosphoserine. Positions 224–307 (PGEHSGQSQG…LPPNGHPGVP (84 aa)) are transactivation domain (TAM). 2 short sequence motifs (9aaTAD) span residues 275-284 (IGELSSDVIS) and 290-298 (DVNEFDQYL). A disordered region spans residues 334–415 (VWMSKQQAPP…HYSEQQQHSP (82 aa)). Over residues 341–376 (APPPPPQQPPQAPPAPQAPPQPQAAPPQQPAAPPQQ) the composition is skewed to pro residues. The segment covering 380-415 (HTLTTLSSEPGQSQRTHIKTEQLSPSHYSEQQQHSP) has biased composition (polar residues). Residues 394 to 509 (RTHIKTEQLS…QPVYTQLTRP (116 aa)) are transactivation domain (TAC). Residue K398 forms a Glycyl lysine isopeptide (Lys-Gly) (interchain with G-Cter in ubiquitin) linkage. The 9aaTAD 3 signature appears at 460 to 468 (TGLYSTFTY). The tract at residues 479–509 (PIADTSGVPSIPQTHSPQHWEQPVYTQLTRP) is disordered. Positions 485–509 (GVPSIPQTHSPQHWEQPVYTQLTRP) are enriched in polar residues.

Homodimer; homodimerization is required for activity. Interacts (via C-terminus) with ZNF219; forming a complex that binds to the COL2A1 promoter and activates COL2A1 expression. Interacts with DDRGK1. Interacts with EP300/p300. Interacts with beta-catenin (CTNNB1); inhibiting CTNNB1 activity by competing with the binding sites of TCF/LEF within CTNNB1. Post-translationally, acetylated; acetylation impairs nuclear localization and ability to transactivate expression of target genes. Deacetylated by SIRT1. In terms of processing, phosphorylation at Ser-64 and Ser-211 by PKA increases transcriptional activity and may help delay chondrocyte maturation downstream of PTHLH/PTHrP signaling. Phosphorylation at either Ser-64 or Ser-211 is required for sumoylation, but phosphorylation is not dependent on sumoylation. Phosphorylated on tyrosine residues; tyrosine dephosphorylation by PTPN11/SHP2 blocks SOX9 phosphorylation by PKA and subsequent SUMOylation. Sumoylated; phosphorylation at either Ser-64 or Ser-211 is required for sumoylation. Sumoylation is induced by BMP signaling pathway. Post-translationally, ubiquitinated; ubiquitination leads to proteasomal degradation and is negatively regulated by DDRGK1.

The protein localises to the nucleus. In terms of biological role, transcription factor that plays a key role in chondrocytes differentiation and skeletal development. Specifically binds the 5'-ACAAAG-3' DNA motif present in enhancers and super-enhancers and promotes expression of genes important for chondrogenesis, including cartilage matrix protein-coding genes COL2A1, COL4A2, COL9A1, COL11A2 and ACAN, SOX5 and SOX6. Also binds to some promoter regions. Plays a central role in successive steps of chondrocyte differentiation. Absolutely required for precartilaginous condensation, the first step in chondrogenesis during which skeletal progenitors differentiate into prechondrocytes. Together with SOX5 and SOX6, required for overt chondrogenesis when condensed prechondrocytes differentiate into early stage chondrocytes, the second step in chondrogenesis. Later, required to direct hypertrophic maturation and block osteoblast differentiation of growth plate chondrocytes: maintains chondrocyte columnar proliferation, delays prehypertrophy and then prevents osteoblastic differentiation of chondrocytes by lowering beta-catenin (CTNNB1) signaling and RUNX2 expression. Also required for chondrocyte hypertrophy, both indirectly, by keeping the lineage fate of chondrocytes, and directly, by remaining present in upper hypertrophic cells and transactivating COL10A1 along with MEF2C. Low lipid levels are the main nutritional determinant for chondrogenic commitment of skeletal progenitor cells: when lipids levels are low, FOXO (FOXO1 and FOXO3) transcription factors promote expression of SOX9, which induces chondrogenic commitment and suppresses fatty acid oxidation. Mechanistically, helps, but is not required, to remove epigenetic signatures of transcriptional repression and deposit active promoter and enhancer marks at chondrocyte-specific genes. Acts in cooperation with the Hedgehog pathway-dependent GLI (GLI1 and GLI3) transcription factors. In addition to cartilage development, also acts as a regulator of proliferation and differentiation in epithelial stem/progenitor cells: involved in the lung epithelium during branching morphogenesis, by balancing proliferation and differentiation and regulating the extracellular matrix. Controls epithelial branching during kidney development. The protein is Transcription factor SOX-9 (SOX9) of Callithrix jacchus (White-tufted-ear marmoset).